Here is a 128-residue protein sequence, read N- to C-terminus: MENVPNVYFNPVFIEPTFKHSLLSVYKHRLIVLFEVFVVFILIYVFFRSELNMFFMHKRKIPDPIDRLRRANLACEDDKLMIYGLPWITTQTSALSINSKPIVYKDCAKLLRSINGSQPVSLNDVLRR.

Over 1–30 (MENVPNVYFNPVFIEPTFKHSLLSVYKHRL) the chain is Intravirion. The helical; Signal-anchor for type III membrane protein transmembrane segment at 31–51 (IVLFEVFVVFILIYVFFRSEL) threads the bilayer. Residues 52–107 (NMFFMHKRKIPDPIDRLRRANLACEDDKLMIYGLPWITTQTSALSINSKPIVYKDC) lie on the Virion surface side of the membrane. A disulfide bridge connects residues C75 and C107.

The protein belongs to the orthopoxvirus OPG099 family. In terms of assembly, interacts with OPG086. Component of the entry fusion complex (EFC) composed of OPG053, OPG076, OPG086, OPG094, OPG095, OPG099, OPG107, OPG143, OPG104J5, OPG147 and OPG155. Except for OPG095 and OPG053, each of the EFC proteins is required for assembly or stability of the complex. In terms of processing, most cysteines are linked by disulfide bonds. They are created by the viral disulfide bond formation pathway, a poxvirus-specific redox pathway that operates on the cytoplasmic side of the MV membranes. Unglycosylated because produced in viral factories instead of the classic ER -Golgi route.

Its subcellular location is the virion membrane. Component of the entry fusion complex (EFC), which consists of 11 proteins. During cell infection, this complex mediates entry of the virion core into the host cytoplasm by a two-step mechanism consisting of lipid mixing of the viral and cellular membranes and subsequent pore formation. The polypeptide is Entry-fusion complex protein OPG094 (OPG099) (Homo sapiens (Human)).